A 305-amino-acid chain; its full sequence is Formamidopyrimidine-DNA glycosylase (305 aa).

Pro2 acts as the Schiff-base intermediate with DNA in catalysis. The active-site Proton donor is Glu3. Lys59 serves as the catalytic Proton donor; for beta-elimination activity. His92, Arg111, and Arg154 together coordinate DNA. An FPG-type zinc finger spans residues 239-273 (QVFDRAGEPCPVCGTPIRKVAVAQRGTHFCPRCQP). Arg263 acts as the Proton donor; for delta-elimination activity in catalysis. Residues 282–305 (PRRARPGRRGNSVRVAAEPPGTYE) are disordered.

This sequence belongs to the FPG family. In terms of assembly, monomer. Zn(2+) is required as a cofactor.

It carries out the reaction Hydrolysis of DNA containing ring-opened 7-methylguanine residues, releasing 2,6-diamino-4-hydroxy-5-(N-methyl)formamidopyrimidine.. It catalyses the reaction 2'-deoxyribonucleotide-(2'-deoxyribose 5'-phosphate)-2'-deoxyribonucleotide-DNA = a 3'-end 2'-deoxyribonucleotide-(2,3-dehydro-2,3-deoxyribose 5'-phosphate)-DNA + a 5'-end 5'-phospho-2'-deoxyribonucleoside-DNA + H(+). Its function is as follows. Involved in base excision repair of DNA damaged by oxidation or by mutagenic agents. Acts as a DNA glycosylase that recognizes and removes damaged bases. Has a preference for oxidized purines, such as 7,8-dihydro-8-oxoguanine (8-oxoG). Has AP (apurinic/apyrimidinic) lyase activity and introduces nicks in the DNA strand. Cleaves the DNA backbone by beta-delta elimination to generate a single-strand break at the site of the removed base with both 3'- and 5'-phosphates. In Symbiobacterium thermophilum (strain DSM 24528 / JCM 14929 / IAM 14863 / T), this protein is Formamidopyrimidine-DNA glycosylase.